The primary structure comprises 380 residues: Cyclohex-1-ene-1-carbonyl-CoA dehydrogenase (380 aa).

Asp91 functions as the Proton acceptor in the catalytic mechanism. Positions 122, 124, 125, 131, and 157 each coordinate FAD. Ser131 contacts cyclohex-1-ene-1-carbonyl-CoA. Ser131 provides a ligand contact to cyclohexa-1,5-diene-1-carbonyl-CoA. Residues Lys178, Arg242, and Thr363 each contribute to the cyclohex-1-ene-1-carbonyl-CoA site. Cyclohexa-1,5-diene-1-carbonyl-CoA-binding residues include Lys178, Arg242, and Thr363. FAD-binding residues include Thr365 and Gln367. Cyclohex-1-ene-1-carbonyl-CoA is bound at residue Arg375. Cyclohexa-1,5-diene-1-carbonyl-CoA is bound at residue Arg375.

The protein belongs to the acyl-CoA dehydrogenase family. Homotetramer. FAD is required as a cofactor.

It catalyses the reaction cyclohex-1-ene-1-carbonyl-CoA + oxidized [electron-transfer flavoprotein] + H(+) = cyclohexa-1,5-diene-1-carbonyl-CoA + reduced [electron-transfer flavoprotein]. Its function is as follows. Acyl-CoA dehydrogenase involved in the anaerobic degradation of cyclohexane carboxylic acid (CHC). Catalyzes the 1,4-dehydrogenation at C3 and C6 of cyclohex-1-ene-1-carbonyl-CoA (CHeneCoA or Ch1CoA) to cyclohexa-1,5-diene-1-carbonyl-CoA (CHdieneCoA or Ch1,5CoA). Also able to catalyze, at a lower rate, the dehydrogenation at C3 and C4 of CHdieneCoA to benzoyl-CoA. This Geobacter metallireducens (strain ATCC 53774 / DSM 7210 / GS-15) protein is Cyclohex-1-ene-1-carbonyl-CoA dehydrogenase.